The following is a 387-amino-acid chain: Alkanesulfonate monooxygenase (387 aa).

This sequence belongs to the SsuD family.

The enzyme catalyses an alkanesulfonate + FMNH2 + O2 = an aldehyde + FMN + sulfite + H2O + 2 H(+). Functionally, catalyzes the desulfonation of aliphatic sulfonates. In Ralstonia pickettii (strain 12J), this protein is Alkanesulfonate monooxygenase.